The following is a 353-amino-acid chain: Melanin-concentrating hormone receptor 1 (353 aa).

The interval 1-26 (MDLQTSLLSTGPNASNISDGQDNLTL) is disordered. The Extracellular portion of the chain corresponds to 1-45 (MDLQTSLLSTGPNASNISDGQDNLTLPGSPPRTGSVSYINIIMPS). Residues N13, N16, and N23 are each glycosylated (N-linked (GlcNAc...) asparagine). A helical transmembrane segment spans residues 46 to 66 (VFGTICLLGIVGNSTVIFAVV). The Cytoplasmic portion of the chain corresponds to 67–79 (KKSKLHWCSNVPD). A helical membrane pass occupies residues 80 to 100 (IFIINLSVVDLLFLLGMPFMI). Residues 101 to 116 (HQLMGNGVWHFGETMC) are Extracellular-facing. An intrachain disulfide couples C116 to C194. A helical transmembrane segment spans residues 117 to 139 (TLITAMDANSQFTSTYILTAMTI). The Cytoplasmic portion of the chain corresponds to 140-161 (DRYLATVHPISSTKFRKPSMAT). The helical transmembrane segment at 162–182 (LVICLLWALSFISITPVWLYA) threads the bilayer. Residues 183–204 (RLIPFPGGAVGCGIRLPNPDTD) lie on the Extracellular side of the membrane. A helical membrane pass occupies residues 205–225 (LYWFTLYQFFLAFALPFVVIT). Residues 226-256 (AAYVKILQRMTSSVAPASQRSIRLRTKRVTR) lie on the Cytoplasmic side of the membrane. The helical transmembrane segment at 257-277 (TAIAICLVFFVCWAPYYVLQL) threads the bilayer. Residues 278 to 294 (TQLSISRPTLTFVYLYN) lie on the Extracellular side of the membrane. A helical transmembrane segment spans residues 295 to 315 (AAISLGYANSCLNPFVYIVLC). The Cytoplasmic segment spans residues 316 to 353 (ETFRKRLVLSVKPAAQGQLRTVSNAQTADEERTESKGT).

Belongs to the G-protein coupled receptor 1 family. In terms of assembly, interacts with NCDN. In terms of tissue distribution, high level in the brain, moderate amounts in the eye and skeletal muscle, and small amounts in tongue and pituitary.

Its subcellular location is the cell membrane. Receptor for melanin-concentrating hormone, coupled to G proteins that inhibit adenylyl cyclase. The sequence is that of Melanin-concentrating hormone receptor 1 from Rattus norvegicus (Rat).